An 85-amino-acid polypeptide reads, in one-letter code: uncharacterized protein (85 aa).

This is an uncharacterized protein from Escherichia coli (strain K12).